Consider the following 1728-residue polypeptide: Protein NETWORKED 1A (1728 aa).

In terms of domain architecture, NAB spans 13-92; the sequence is YSWWWDSHIP…ERYDHATVEL (80 aa). Coiled coils occupy residues 155-446, 476-827, 857-885, 954-1016, 1090-1323, 1403-1431, and 1576-1684; these read LGNS…LEIE, MLRD…QVEI, FSEKLIAELESENLEQQMEAEFLVHEIDN, QFQS…AELQ, EQAE…KETV, LLQDMKTRIKTIKQAVAEEKKRRGKLRRR, and RRLA…TKSK. A disordered region spans residues 1419-1441; the sequence is AEEKKRRGKLRRRSSSHRSKDRK. A compositionally biased stretch (basic residues) spans 1424-1439; it reads RRGKLRRRSSSHRSKD.

This sequence belongs to the NET family. In terms of assembly, interacts with F-actin. As to expression, expressed in root meristems and at very low levels throughout mature vasculature.

It localises to the cytoplasm. It is found in the cytoskeleton. Its subcellular location is the cell membrane. The protein resides in the cell junction. The protein localises to the plasmodesma. Plant-specific actin binding protein. Associates with F-actin at the plasma membrane and plasmodesmata. May be part of a membrane-cytoskeletal adapter complex. This is Protein NETWORKED 1A from Arabidopsis thaliana (Mouse-ear cress).